Reading from the N-terminus, the 252-residue chain is MTLSAAVDNGQSGYPWLVFLHGFSGDRDEWREVGDAFPAWPRLYLDLPGHGGSADIAVQDFAGVNTLLLATLNSYNILNYWLIGYSLGGRVAMNFACQPRAGLRGLIVEGGHPGLQDAEARQARRSNDRAWAERFRRDPLAQVFADWYQQPVFASLDAAQRESLVALRSRNNGATLAAMLQATSLAGQADLRAPLQARDFPFHYLCGERDAKFRAIAQALAADTHIIHHAGHNAHRDNPAAVIACLAQILAS.

Belongs to the AB hydrolase superfamily. MenH family. As to quaternary structure, monomer.

The enzyme catalyses 5-enolpyruvoyl-6-hydroxy-2-succinyl-cyclohex-3-ene-1-carboxylate = (1R,6R)-6-hydroxy-2-succinyl-cyclohexa-2,4-diene-1-carboxylate + pyruvate. It participates in quinol/quinone metabolism; 1,4-dihydroxy-2-naphthoate biosynthesis; 1,4-dihydroxy-2-naphthoate from chorismate: step 3/7. The protein operates within quinol/quinone metabolism; menaquinone biosynthesis. Its function is as follows. Catalyzes a proton abstraction reaction that results in 2,5-elimination of pyruvate from 2-succinyl-5-enolpyruvyl-6-hydroxy-3-cyclohexene-1-carboxylate (SEPHCHC) and the formation of 2-succinyl-6-hydroxy-2,4-cyclohexadiene-1-carboxylate (SHCHC). This Klebsiella pneumoniae (strain 342) protein is 2-succinyl-6-hydroxy-2,4-cyclohexadiene-1-carboxylate synthase.